The following is a 719-amino-acid chain: Potassium channel KOR2 (719 aa).

The Cytoplasmic segment spans residues 1 to 63 (MAEEYELNEI…VIHPNGRWYR (63 aa)). A helical transmembrane segment spans residues 64 to 84 (IWANMMFLWSIYSTFFTPFEF). At 85–93 (SFFRGLPDQ) the chain is on the extracellular side. Residues 94–114 (LLDLECVQLVFLADVAVHFFL) form a helical membrane-spanning segment. Residues 115–137 (AYRDPHTYRMVHDKRHIALRYIK) are Cytoplasmic-facing. The helical transmembrane segment at 138-158 (GSFALDVLGCFPWDAIYKVTG) threads the bilayer. Over 159–164 (RVEAVR) the chain is Extracellular. Residues 165–185 (WLVWVRLYRGRKVMAFFKRVE) traverse the membrane as a helical; Voltage-sensor segment. At 186–199 (KDIRVSYLLTRIVK) the chain is on the cytoplasmic side. A helical transmembrane segment spans residues 200-220 (LITVELYCTHTAACGFYYLAT). Topologically, residues 221–255 (TLPPAREGGTWIGSLSLGDARYINFREVDLLTRYV) are extracellular. Positions 256 to 275 (TSLYLAIVTMATVGYGDIHA) form an intramembrane region, pore-forming. At 276–285 (VNTREMAFTV) the chain is on the extracellular side. The helical transmembrane segment at 286 to 306 (VYISFSIVLSAYLIGNMTALI) threads the bilayer. Over 307 to 719 (VKGSRTERFR…LEQARTVATN (413 aa)) the chain is Cytoplasmic. 383–503 (LFRGCSDDFL…SQILSNLLKG (121 aa)) provides a ligand contact to a nucleoside 3',5'-cyclic phosphate. 5 ANK repeats span residues 523–556 (KQES…DPSK), 560–589 (DGRT…NVNS), 593–622 (FGNS…ILNL), 624–653 (DAGG…SPNC), and 657–686 (DQRT…DIQA).

This sequence belongs to the potassium channel family. Plant (TC 1.A.1.4) subfamily.

Its subcellular location is the membrane. Its function is as follows. Probable outward-rectifying potassium channel. In Oryza sativa subsp. japonica (Rice), this protein is Potassium channel KOR2.